We begin with the raw amino-acid sequence, 94 residues long: ESAT-6-like protein EsxL (94 aa).

It belongs to the WXG100 family. ESAT-6 subfamily. As to quaternary structure, strongly interacts with EsxK to form a heterodimeric complex under reducing conditions.

It is found in the secreted. The sequence is that of ESAT-6-like protein EsxL from Mycobacterium bovis (strain ATCC BAA-935 / AF2122/97).